Consider the following 972-residue polypeptide: Nuclear factor NF-kappa-B p105 subunit (972 aa).

Positions 39–246 (ADGPYLQILE…DAIYDSKAPN (208 aa)) constitute an RHD domain. C61 is modified (S-nitrosocysteine; alternate). C61 carries S-(15-deoxy-Delta12,14-prostaglandin J2-9-yl)cysteine; alternate lipidation. Residue K325 forms a Glycyl lysine isopeptide (Lys-Gly) (interchain with G-Cter in SUMO2) linkage. Residue S337 is modified to Phosphoserine; by PKA. The short motif at 360-365 (QRKRQK) is the Nuclear localization signal element. The interval 372 to 394 (DSFGGGSGAGAGGGGMFGSGGGG) is GRR. The disordered stretch occupies residues 425–473 (KSNAGMKHGTIDTPSKNDSEGCGKNVDREAVNLSGKVTEPTEQDKESSM). N6-acetyllysine; by EP300 occurs at positions 431 and 440. Residues 435 to 972 (IDTPSKNDSE…GQEGPIEGKI (538 aa)) form an interaction with CFLAR region. Positions 439–454 (SKNDSEGCGKNVDREA) are enriched in basic and acidic residues. ANK repeat units follow at residues 539–568 (NGDS…GLIS), 578–607 (LYQT…DLSL), 611–640 (LGNS…AALL), 647–676 (EGLN…DVNA), 681–711 (SGRT…HVDS), and 715–744 (DGTT…DPLV). The essential for interaction with HIF1AN stretch occupies residues 647–681 (EGLNAIHIAVMSNSMPCLLLLVAAGADVNAQERKS). N675 is modified ((3S)-3-hydroxyasparagine; by HIF1AN). Residue S756 is modified to Phosphoserine. The stretch at 768–798 (PGTTPLDMATNWQVFDILNGKPYEPEFTSDD) is one ANK 7 repeat. A Death domain is found at 814–889 (LQLYKLLEIP…EAIEVIQAAF (76 aa)). Residues 894–926 (TAAPSPGKGAPQTLSLPLSSASTRSPVDEVRDD) are disordered. Over residues 905–918 (QTLSLPLSSASTRS) the composition is skewed to polar residues. Phosphoserine; by GSK3-beta; in vitro is present on residues S908 and S912. Phosphoserine is present on S927. 2 positions are modified to phosphoserine; by IKKB: S931 and S936. Position 941 is a phosphoserine (S941). Position 947 is a phosphothreonine (T947).

Component of the NF-kappa-B p65-p50 complex. Homodimer; component of the NF-kappa-B p50-p50 complex. Component of the NF-kappa-B p105-p50 complex. Component of the NF-kappa-B p50-c-Rel complex. Component of a complex consisting of the NF-kappa-B p50-p50 homodimer and BCL3. Also interacts with MAP3K8. NF-kappa-B p50 subunit interacts with NCOA3 coactivator, which may coactivate NF-kappa-B dependent expression via its histone acetyltransferase activity. Interacts with TSC22D3; this interaction prevents nuclear translocation and DNA-binding. Interacts with SPAG9 and UNC5CL. NFKB1/p105 interacts with CFLAR; the interaction inhibits p105 processing into p50. NFKB1/p105 forms a ternary complex with MAP3K8 and TNIP2. Interacts with GSK3B; the interaction prevents processing of p105 to p50. NFKB1/p50 interacts with NFKBIE. NFKB1/p50 interacts with NFKBIZ. Nuclear factor NF-kappa-B p50 subunit interacts with NFKBID. Directly interacts with MEN1. Interacts with HIF1AN. Interacts with FEM1A; interaction is direct. In terms of processing, generation of the NF-kappa-B p50 (Nuclear factor NF-kappa-B p50 subunit) transcription factor takes place both cotranslationally and post-translationally via non-mutually exclusive mechanisms. A cotranslational processing allows the production of both p50 and p105 (Nuclear factor NF-kappa-B p105 subunit) from a single NFKB1 mRNA. While translation occurs, the particular unfolded structure after the GRR repeat region acts as a substrate for the proteasome, promoting degradation of the C-terminus. The GRR acts as a proteasomal 'stop signal', protecting the region upstream of the GRR from degradation and promoting generation of p50. It is unclear if limited proteasome degradation during cotranslational processing depends on ubiquitination. NF-kappa-B p50 is also generated post-translationally following ubiquitination by the KPC complex, leading to limited processing by the proteasome downstream of the GRR region, thereby generating p50. Post-translationally, phosphorylation at the C-terminus by IKBKB/IKKB acts as a signal for ubiquitination and promotes either complete degradation or processing to generate the NF-kappa-B p50 (Nuclear factor NF-kappa-B p50 subunit). Phosphorylation at Ser-908 and Ser-912 primes p105 for proteolytic processing in response to TNF-alpha stimulation. Phosphorylation at Ser-927, Ser-931 and Ser-936 are required for BTRC/BTRCP-mediated ubiquitination and proteolysis. Phosphorylation at Ser-931 is also required for ubiquitination by the KPC complex and limited processing to generate NF-kappa-B p50 (Nuclear factor NF-kappa-B p50 subunit). Polyubiquitinated at multiple Lys residues in the C-terminus. Polyubiquitinated by the SCF(FBXW11) and SCF(BTRC) complexes following phosphorylation at Ser-923, Ser-927, Ser-931 and Ser-936, leading to its complete degradation. In contrast, polyubiquitination by the KPC complex following phosphorylation at Ser-931 leads to limited proteosomal processing and generation of the active NF-kappa-B p50 (Nuclear factor NF-kappa-B p50 subunit). In terms of processing, S-nitrosylation of Cys-61 affects DNA binding. Post-translationally, the covalent modification of cysteine by 15-deoxy-Delta12,14-prostaglandin-J2 is autocatalytic and reversible. It may occur as an alternative to other cysteine modifications, such as S-nitrosylation and S-palmitoylation.

The protein localises to the cytoplasm. It localises to the nucleus. In terms of biological role, NF-kappa-B is a pleiotropic transcription factor present in almost all cell types and is the endpoint of a series of signal transduction events that are initiated by a vast array of stimuli related to many biological processes such as inflammation, immunity, differentiation, cell growth, tumorigenesis and apoptosis. NF-kappa-B is a homo- or heterodimeric complex formed by the Rel-like domain-containing proteins RELA/p65, RELB, NFKB1/p105, NFKB1/p50, REL and NFKB2/p52 and the heterodimeric p65-p50 complex appears to be most abundant one. The dimers bind at kappa-B sites in the DNA of their target genes and the individual dimers have distinct preferences for different kappa-B sites that they can bind with distinguishable affinity and specificity. Different dimer combinations act as transcriptional activators or repressors, respectively. NF-kappa-B is controlled by various mechanisms of post-translational modification and subcellular compartmentalization as well as by interactions with other cofactors or corepressors. NF-kappa-B complexes are held in the cytoplasm in an inactive state complexed with members of the NF-kappa-B inhibitor (I-kappa-B) family. In a conventional activation pathway, I-kappa-B is phosphorylated by I-kappa-B kinases (IKKs) in response to different activators, subsequently degraded thus liberating the active NF-kappa-B complex which translocates to the nucleus. NF-kappa-B heterodimeric p65-p50 and RelB-p50 complexes are transcriptional activators. The NF-kappa-B p50-p50 homodimer is a transcriptional repressor, but can act as a transcriptional activator when associated with BCL3. NFKB1 appears to have dual functions such as cytoplasmic retention of attached NF-kappa-B proteins by p105 and generation of p50 by a cotranslational processing. The proteasome-mediated process ensures the production of both p50 and p105 and preserves their independent function, although processing of NFKB1/p105 also appears to occur post-translationally. p50 binds to the kappa-B consensus sequence 5'-GGRNNYYCC-3', located in the enhancer region of genes involved in immune response and acute phase reactions. In a complex with MAP3K8, NFKB1/p105 represses MAP3K8-induced MAPK signaling; active MAP3K8 is released by proteasome-dependent degradation of NFKB1/p105. P105 is the precursor of the active p50 subunit (Nuclear factor NF-kappa-B p50 subunit) of the nuclear factor NF-kappa-B. Acts as a cytoplasmic retention of attached NF-kappa-B proteins by p105. Its function is as follows. Constitutes the active form, which associates with RELA/p65 to form the NF-kappa-B p65-p50 complex to form a transcription factor. Together with RELA/p65, binds to the kappa-B consensus sequence 5'-GGRNNYYCC-3', located in the enhancer region of genes involved in immune response and acute phase reactions. This is Nuclear factor NF-kappa-B p105 subunit (NFKB1) from Canis lupus familiaris (Dog).